A 269-amino-acid chain; its full sequence is Putative pyruvate, phosphate dikinase regulatory protein (269 aa).

Residue 151-158 (GISRTSKT) coordinates ADP.

It belongs to the pyruvate, phosphate/water dikinase regulatory protein family. PDRP subfamily.

It carries out the reaction N(tele)-phospho-L-histidyl/L-threonyl-[pyruvate, phosphate dikinase] + ADP = N(tele)-phospho-L-histidyl/O-phospho-L-threonyl-[pyruvate, phosphate dikinase] + AMP + H(+). The catalysed reaction is N(tele)-phospho-L-histidyl/O-phospho-L-threonyl-[pyruvate, phosphate dikinase] + phosphate + H(+) = N(tele)-phospho-L-histidyl/L-threonyl-[pyruvate, phosphate dikinase] + diphosphate. Its function is as follows. Bifunctional serine/threonine kinase and phosphorylase involved in the regulation of the pyruvate, phosphate dikinase (PPDK) by catalyzing its phosphorylation/dephosphorylation. The protein is Putative pyruvate, phosphate dikinase regulatory protein of Staphylococcus aureus.